Reading from the N-terminus, the 314-residue chain is Lipoyl synthase (314 aa).

Residues 1 to 24 (MMDTPIIRHPEKVRRPDNPSPRKP) are disordered. [4Fe-4S] cluster contacts are provided by Cys-53, Cys-58, Cys-64, Cys-79, Cys-83, Cys-86, and Ser-293. The 218-residue stretch at 65–282 (WKRRHATFMI…ADIARGKGFL (218 aa)) folds into the Radical SAM core domain. The segment covering 294–308 (HHADRDFEDLRKARQ) has biased composition (basic and acidic residues). The segment at 294–314 (HHADRDFEDLRKARQDAAATK) is disordered.

The protein belongs to the radical SAM superfamily. Lipoyl synthase family. [4Fe-4S] cluster is required as a cofactor.

The protein localises to the cytoplasm. It carries out the reaction [[Fe-S] cluster scaffold protein carrying a second [4Fe-4S](2+) cluster] + N(6)-octanoyl-L-lysyl-[protein] + 2 oxidized [2Fe-2S]-[ferredoxin] + 2 S-adenosyl-L-methionine + 4 H(+) = [[Fe-S] cluster scaffold protein] + N(6)-[(R)-dihydrolipoyl]-L-lysyl-[protein] + 4 Fe(3+) + 2 hydrogen sulfide + 2 5'-deoxyadenosine + 2 L-methionine + 2 reduced [2Fe-2S]-[ferredoxin]. The protein operates within protein modification; protein lipoylation via endogenous pathway; protein N(6)-(lipoyl)lysine from octanoyl-[acyl-carrier-protein]: step 2/2. Functionally, catalyzes the radical-mediated insertion of two sulfur atoms into the C-6 and C-8 positions of the octanoyl moiety bound to the lipoyl domains of lipoate-dependent enzymes, thereby converting the octanoylated domains into lipoylated derivatives. This Rhodospirillum rubrum (strain ATCC 11170 / ATH 1.1.1 / DSM 467 / LMG 4362 / NCIMB 8255 / S1) protein is Lipoyl synthase.